A 250-amino-acid polypeptide reads, in one-letter code: AA9 family lytic polysaccharide monooxygenase AA17 (250 aa).

The first 21 residues, 1-21, serve as a signal peptide directing secretion; it reads MAMSKIVSLTGLLASASLVAG. Cu(2+) is bound by residues His-22 and His-107. Cystine bridges form between Cys-77–Cys-199 and Cys-118–Cys-122. The N-linked (GlcNAc...) asparagine glycan is linked to Asn-159. His-185 and Gln-194 together coordinate O2. Tyr-196 provides a ligand contact to Cu(2+).

Belongs to the polysaccharide monooxygenase AA9 family. Cu(2+) serves as cofactor.

Its subcellular location is the secreted. Lytic polysaccharide monooxygenase (LPMO) that exhibits oxidative cleavage beta-O-4 linkage of lignin resulting in the formation of aromatic compound guaiacol. Catalysis by LPMOs requires the reduction of the active-site copper from Cu(II) to Cu(I) by a reducing agent and H(2)O(2) or O(2) as a cosubstrate. Does not use cellulose, cello-oligosaccharides, xyloglucan, xylan, chitin nor starch as substrates. Able to depolymerize the lignin dimer guaicyl glycerol beta-guaicyl ether (GGE). This Aspergillus oryzae (strain ATCC 42149 / RIB 40) (Yellow koji mold) protein is AA9 family lytic polysaccharide monooxygenase AA17.